Consider the following 594-residue polypeptide: Trehalase (594 aa).

An N-terminal signal peptide occupies residues Met-1–Ser-27. Asn-56, Asn-70, Asn-97, and Asn-166 each carry an N-linked (GlcNAc...) asparagine glycan. Residues Arg-190, Trp-197 to Asp-198, and Asn-234 contribute to the substrate site. A glycan (N-linked (GlcNAc...) asparagine) is linked at Asn-242. Position 243–245 (Arg-243–Gln-245) interacts with substrate. N-linked (GlcNAc...) asparagine glycosylation is found at Asn-261 and Asn-305. Residues Arg-312–Glu-314 and Gly-346 contribute to the substrate site. The active-site Proton donor/acceptor is the Asp-348. Residues Asn-361, Asn-395, Asn-513, and Asn-537 are each glycosylated (N-linked (GlcNAc...) asparagine). Glu-549 acts as the Proton donor/acceptor in catalysis. Substrate is bound at residue Glu-564.

It belongs to the glycosyl hydrolase 37 family.

It catalyses the reaction alpha,alpha-trehalose + H2O = alpha-D-glucose + beta-D-glucose. The chain is Trehalase (treh) from Dictyostelium discoideum (Social amoeba).